The chain runs to 333 residues: Eukaryotic translation initiation factor 3 subunit I (333 aa).

WD repeat units follow at residues 8–47, 50–91, 144–183, and 186–225; these read GHERSITQIKYNREGDLLFTVAKDPIVNVWYSVNGERLGT, GHTG…ALLK, CNDSKITSAVWGPLGECIIAGHESGELNQYSAKSGEVLVN, and EHSRQINDIQLSREMTMFVTASKDNTAKLFDSTTLEHQKT. Phosphothreonine is present on Thr-219. Lys-264 carries the post-translational modification N6-acetyllysine. Lys-282 participates in a covalent cross-link: Glycyl lysine isopeptide (Lys-Gly) (interchain with G-Cter in ubiquitin). The WD 5 repeat unit spans residues 283-324; it reads GHFGPINSVAFHPDGKSYSSGGEDGYVRIHYFDPQYFEFEFE. Tyr-308 is modified (phosphotyrosine).

The protein belongs to the eIF-3 subunit I family. Component of the eukaryotic translation initiation factor 3 (eIF-3) complex, which is composed of 13 subunits: EIF3A, EIF3B, EIF3C, EIF3D, EIF3E, EIF3F, EIF3G, EIF3H, EIF3I, EIF3J, EIF3K, EIF3L and EIF3M. The eIF-3 complex appears to include 3 stable modules: module A is composed of EIF3A, EIF3B, EIF3G and EIF3I; module B is composed of EIF3F, EIF3H, and EIF3M; and module C is composed of EIF3C, EIF3D, EIF3E, EIF3K and EIF3L. EIF3C of module C binds EIF3B of module A and EIF3H of module B, thereby linking the three modules. EIF3J is a labile subunit that binds to the eIF-3 complex via EIF3B. The eIF-3 complex interacts with RPS6KB1 under conditions of nutrient depletion. Mitogenic stimulation leads to binding and activation of a complex composed of MTOR and RPTOR, leading to phosphorylation and release of RPS6KB1 and binding of EIF4B to eIF-3. Post-translationally, phosphorylated by TGF-beta type II receptor.

It is found in the cytoplasm. Component of the eukaryotic translation initiation factor 3 (eIF-3) complex, which is required for several steps in the initiation of protein synthesis. The eIF-3 complex associates with the 40S ribosome and facilitates the recruitment of eIF-1, eIF-1A, eIF-2:GTP:methionyl-tRNAi and eIF-5 to form the 43S pre-initiation complex (43S PIC). The eIF-3 complex stimulates mRNA recruitment to the 43S PIC and scanning of the mRNA for AUG recognition. The eIF-3 complex is also required for disassembly and recycling of post-termination ribosomal complexes and subsequently prevents premature joining of the 40S and 60S ribosomal subunits prior to initiation. The eIF-3 complex specifically targets and initiates translation of a subset of mRNAs involved in cell proliferation, including cell cycling, differentiation and apoptosis, and uses different modes of RNA stem-loop binding to exert either translational activation or repression. The chain is Eukaryotic translation initiation factor 3 subunit I from Oryctolagus cuniculus (Rabbit).